Reading from the N-terminus, the 149-residue chain is Ribonuclease H (149 aa).

Residues 1 to 143 (MNAVEIYTDG…ADMLANRGVE (143 aa)) enclose the RNase H type-1 domain. Residues aspartate 9, glutamate 47, aspartate 69, and aspartate 135 each coordinate Mg(2+).

This sequence belongs to the RNase H family. In terms of assembly, monomer. It depends on Mg(2+) as a cofactor.

The protein localises to the cytoplasm. The enzyme catalyses Endonucleolytic cleavage to 5'-phosphomonoester.. Functionally, endonuclease that specifically degrades the RNA of RNA-DNA hybrids. The protein is Ribonuclease H of Albidiferax ferrireducens (strain ATCC BAA-621 / DSM 15236 / T118) (Rhodoferax ferrireducens).